The following is an 85-amino-acid chain: Large ribosomal subunit protein bL27 (85 aa).

The disordered stretch occupies residues 1–20 (MATKKAGGSTRNGRDSEAKR).

The protein belongs to the bacterial ribosomal protein bL27 family.

The polypeptide is Large ribosomal subunit protein bL27 (Actinobacillus succinogenes (strain ATCC 55618 / DSM 22257 / CCUG 43843 / 130Z)).